A 2528-amino-acid chain; its full sequence is MPAMEETQFHDDATVPIAIVGMSCRFPGNATSPEKLWELCSEGRSAWSKIPKSRFRQEGFYNPNAERVGTSNVIGGHFLEEDPSLFDASFFNLSAEAAKTMDPQFRLQLESVYEAMESAGITLEHFAGSDTSVYAGACFRDYQDSLVRDPDLVPRFLLTGNGAAMSSNRISYFYDLHGASMTVDTGCSTTLTALHLACQGLRNRESKTSIVTGANVILNPDMFVTMSSLGLDDALRENDTIRCIIRGTALNQDGKTATLTSPSQTAQSDLIRACYKAAALDPSDTAFLAAHGTGTRTGDAVEISAAADVFGENRLPDRPLWIGSLKTNIGHSEAISGLASVIQAALALEKGLIPPNINFKEPNEKLDQVSAVVKVPSTLEKWPVGSGVRRASVNNFGYGGANAHVILESVTTGSTHRADVNGHHQKNGTTNGHKGANGTTNELNGTNGTANGHDITTGTKDYEQLESFVIALSAKEEASTSSMVTNIGDYVRKLHVEDETKHLKSIAHTLGNHRSMFKWTAAKSIKSLGDLLGTAEEGAQWFAMGRELINTYPVFRQSLDRADRYLKEFGCEWSIIEELSRDAETTNVNDMMLSPPLCTAVQISLVLLLESWGIVSTAVTGHSSGEIAAAYAAGALDFRSAMAVTYFRGEVGLACQDKIVGQGGMIAVGLGPEDAEIRIAHVQSGKIVIACINSQSSVTVSGDLTGIVELEELLKAEGVFARRVKVQAAYHSHHMQVIAKGYLTSLKDILKPGKNFGEIIYSSPTTGKRETNVKLMASPQHWVNNMLSPVRFAESFQNMCFSNQKSSQSGEESRDVDIVLEVGPHGMLQGPIQQMMSLPRFETARIPYLSCLLRGQSAVHTMQTLAAGLMGLGYRVDLAAVNFPQGTSGVKVLHDLPSYPWNHKNSHWWEPRLNKAHRQRVHPPHDLLGSLIPGRDLREPTWRHFIRVHDIPWIRDHVVQSQLVYPGAGFICMAIEAMSQFHDLKDSQSKKIAGYRLADIDILRAMIVPDTLEGLEAHISLRPCSTKLLLTNDWYEFCVSSVGDDDRFLDHCRGRIAIELDTSNMADAAMTSSRGYSHTTGLTRSVDPSNLYRFLRAQGIYHGPIFQNLETISSRKNHSKSSFVVANTASVMPNGFQNPHIIHPTTLDSIFQGAYTALPGAGLDRNTAMIPRSIQELYLSSALTSEVGQCLVSDTSLIRYDGQSFTVNVDVSSKADNKHKPILEIKGLRNQSVGQIALQKGDSSNNDLCFKLDWALDISSVKQERLKEKFGFPLDPAEAHIIMGLRQACLYFIRQTLQSLTSSDRDQLDWHQKRFYDWMMYQIQLAKEDRLGPNSSAWLQCSSSDEQKLLENVRAASVNGEMVVHVGGSIPAILRHEIAPLELMLQDKQLYRYYTDAIKWDRSYQQIDQLVKLHAHKCPTAKIIEIGGGTGGCTRAVLDALSNHGAARCEQYDFTDVSSGFFEAAQQKFAAFADVIRFQKLDIEKDIEMQGFESGSYDLVIASQVLHATGVMENTMSNVQKLLKPGGKLLLVETTRDEMDLQLVFGLLPGWWLSSEEERKMSPSLSVNSWEKVLKKTGFNGLDVELRDCDSDEFYSFSVMMATASSTIASNSIEAAIVHGEVPLPDQFLDDLKAAISSFAGLHPVVGPLKSIDVTGKFCIFIEDPETNILSSPDENSYASIKELVTRCKGLIWVSRGGAMHGTRPDSSLKTGLLRTLRLEYTEKRLISLDLDPARPQWDYDSITTISEVLRQALVQQADSPIKDSEFAEQDGQLFVPRISSDISRNDNLSSDSARAAQMEPFHQLGKLLQMGIKTPGLIDTLQFSKTDAPDNLANDYIEIEPKAFGLNFRDVMVAMGQLEESIMGFECAGIVRRVGPSSADHGIKVGDRVCALLGGQWTNTVRVHWHSVAPIPETMNWETAASIPIVHVTAYISLVKIAKMQAGETVLIHAASGGVGQAAIILAKHAGAEIFATVGTDEKRELLVKVYKIPEDHIFLSRNALFAKNIRRKTNGKGVDVVLNCLAGGLLQESFDCLADFGRFIEIGKRDIELNHCLNMGMFARSTTFTAVDLIAIGRDRSYMVAEALPKIMALLQEKAIRPVTPISIYKIGDIETAFRLMQAGKHMGKIVITAPEDAMVPVVTQPPKLQLHPDASYLIVGGLGGIGRSLCRNFIENGARSLVLLSRNANVSQQSGEFLDELRSTSCIVHVVDCDISNKTQVESTMLRLKQELLPIRGIVHAGMVLQDSVFERMTLEDYNTAIRPKVQGSWNLHSGLSDRDLDFFIMLSSLAGVSGSASQANYTAGGAYQDALAKHRRVQGLPAVSIDLGMVQSVGYVAETKGVAERLVRMGYSPISELEVLKIVEHAITNPPPEISSGQIITGISTKPGRHWTESSWLQDARFATLRERARDAKEQSNSQGGGTDSKISPGQELSMATSLVEAIDVVGRAITAKLATMFLIAAESIIASKSLSEYGVDSLVAVELRNWLAAQLSSDVSVFDVTQSQSLTALATTVATKSARINKSLLVA.

One can recognise a Ketosynthase family 3 (KS3) domain in the interval 14–409; that stretch reads TVPIAIVGMS…GANAHVILES (396 aa). Residues Cys187, His291, and His331 each act as for beta-ketoacyl synthase activity in the active site. The interval 420 to 457 is disordered; it reads VNGHHQKNGTTNGHKGANGTTNELNGTNGTANGHDITT. The span at 436 to 452 shows a compositional bias: low complexity; that stretch reads ANGTTNELNGTNGTANG. The tract at residues 538-856 is malonyl-CoA:ACP transacylase (MAT) domain; that stretch reads GAQWFAMGRE…PYLSCLLRGQ (319 aa). The interval 925–1063 is N-terminal hotdog fold; sequence HDLLGSLIPG…GRIAIELDTS (139 aa). In terms of domain architecture, PKS/mFAS DH spans 925-1239; that stretch reads HDLLGSLIPG…NQSVGQIALQ (315 aa). The dehydratase (DH) domain stretch occupies residues 925–1239; the sequence is HDLLGSLIPG…NQSVGQIALQ (315 aa). His957 (proton acceptor; for dehydratase activity) is an active-site residue. A C-terminal hotdog fold region spans residues 1083–1239; that stretch reads TRSVDPSNLY…NQSVGQIALQ (157 aa). The active-site Proton donor; for dehydratase activity is the Asp1148. Positions 1390 to 1590 are methyltransferase (CMet) domain; the sequence is LYRYYTDAIK…GLDVELRDCD (201 aa). Residues 1817–2130 are enoyl reductase (ER) (ER) domain; the sequence is GLIDTLQFSK…AGKHMGKIVI (314 aa). Residues 2153–2331 are ketoreductase (KR) domain; the sequence is ASYLIVGGLG…AVSIDLGMVQ (179 aa). Residues 2408–2430 form a disordered region; sequence RARDAKEQSNSQGGGTDSKISPG. The Carrier domain occupies 2441 to 2518; sequence EAIDVVGRAI…ALATTVATKS (78 aa). Position 2478 is an O-(pantetheine 4'-phosphoryl)serine (Ser2478).

It participates in secondary metabolite biosynthesis. Its function is as follows. Highly reducing polyketide synthase (HR-PKS); part of the gene cluster that mediates the biosynthesis of squalestatin S1 (SQS1, also known as zaragozic acid A), a heavily oxidized fungal polyketide that offers potent cholesterol lowering activity by targeting squalene synthase (SS). SQS1 is composed of a 2,8-dioxobicyclic[3.2.1]octane-3,4,5-tricarboxyclic acid core that is connected to two lipophilic polyketide arms. These initial steps feature the priming of an unusual benzoic acid starter unit onto the highly reducing polyketide synthase clz14, followed by oxaloacetate extension and product release to generate a tricarboxylic acid containing product. The phenylalanine ammonia lyase (PAL) clz10 and the acyl-CoA ligase clz12 are involved in transforming phenylalanine into benzoyl-CoA. The citrate synthase-like protein clz17 is involved in connecting the C-alpha-carbons of the hexaketide chain and oxaloacetate to afford the tricarboxylic acid unit. The potential hydrolytic enzymes, clz11 and clz13, are in close proximity to pks2 and may participate in product release. On the other side, the tetraketide arm is synthesized by a the squalestatin tetraketide synthase clz2 and enzymatically esterified to the core in the last biosynthetic step, by the acetyltransferase clz6. The biosynthesis of the tetraketide must involve 3 rounds of chain extension. After the first and second rounds methyl-transfer occurs, and in all rounds of extension the ketoreductase and dehydratase are active. The enoyl reductase and C-MeT of clz2 are not active in the final round of extension. The acetyltransferase clz6 appears to have a broad substrate selectivity for its acyl CoA substrate, allowing the in vitro synthesis of novel squalestatins. The biosynthesis of SQS1 requires several oxidative steps likely performed by oxidoreductases clz3, clz15 and clz16. Finally, in support of the identification of the cluster as being responsible for SQS1 production, the cluster contains a gene encoding a putative squalene synthase (SS) clz20, suggesting a likely mechanism for self-resistance. The chain is Squalestatin tetraketide synthase clz2 from Cochliobolus lunatus (Filamentous fungus).